The chain runs to 329 residues: Beta-ketoacyl-[acyl-carrier-protein] synthase III (329 aa).

Active-site residues include Cys123 and His256. The segment at 257–261 (QANIR) is ACP-binding. Asn286 is a catalytic residue.

This sequence belongs to the thiolase-like superfamily. FabH family. In terms of assembly, homodimer.

It is found in the cytoplasm. The catalysed reaction is malonyl-[ACP] + acetyl-CoA + H(+) = 3-oxobutanoyl-[ACP] + CO2 + CoA. Its pathway is lipid metabolism; fatty acid biosynthesis. In terms of biological role, catalyzes the condensation reaction of fatty acid synthesis by the addition to an acyl acceptor of two carbons from malonyl-ACP. Catalyzes the first condensation reaction which initiates fatty acid synthesis and may therefore play a role in governing the total rate of fatty acid production. Possesses both acetoacetyl-ACP synthase and acetyl transacylase activities. Its substrate specificity determines the biosynthesis of branched-chain and/or straight-chain of fatty acids. The chain is Beta-ketoacyl-[acyl-carrier-protein] synthase III from Burkholderia thailandensis (strain ATCC 700388 / DSM 13276 / CCUG 48851 / CIP 106301 / E264).